An 814-amino-acid polypeptide reads, in one-letter code: Telomere repeats-binding bouquet formation protein 1 (814 aa).

ARM repeat units follow at residues 93 to 136 (EMFR…KTSR) and 327 to 368 (GGLP…GMST). Disordered regions lie at residues 461–521 (DQDS…ELKR), 551–584 (STPTEGNRDTQGPDIFRHPDPVKRNQREPSLSDD), and 653–753 (FRRS…KRQN). A coiled-coil region spans residues 488–512 (EKSKKRKHKQKRENERSDNQETRRE). Basic and acidic residues-rich tracts occupy residues 499 to 521 (RENERSDNQETRREGVNKRELKR), 565 to 577 (IFRHPDPVKRNQR), and 679 to 688 (EHSTSAQEHK). The segment covering 689–699 (QKSKREKHKLS) has biased composition (basic residues). Residues 714–741 (RPRETYSPDVKQWTDHRHLKKSSEDARS) are compositionally biased toward basic and acidic residues. Residues 746-799 (GRHRKRQNWSDKELCYLTKGVKRFGHSWNTILWKYPFHPGRTNVDLAKKFYHMQ) enclose the Myb-like domain.

Belongs to the TERB1 family. As to quaternary structure, component of the MAJIN-TERB1-TERB2 complex.

It is found in the chromosome. Its subcellular location is the telomere. The protein localises to the nucleus inner membrane. Meiosis-specific telomere-associated protein involved in meiotic telomere attachment to the nucleus inner membrane, a crucial step for homologous pairing and synapsis. Component of the MAJIN-TERB1-TERB2 complex, which promotes telomere cap exchange by mediating attachment of telomeric DNA to the inner nuclear membrane and replacement of the protective cap of telomeric chromosomes: in early meiosis, the MAJIN-TERB1-TERB2 complex associates with telomeric DNA and the shelterin/telosome complex. During prophase, the complex matures and promotes release of the shelterin/telosome complex from telomeric DNA. In the MAJIN-TERB1-TERB2 complex, TERB1 probably mediates association with the shelterin/telosome complex. This chain is Telomere repeats-binding bouquet formation protein 1 (ccdc79), found in Danio rerio (Zebrafish).